The sequence spans 181 residues: Adenylate kinase 2 (181 aa).

An ATP-binding site is contributed by 10–15 (GSGKST). Positions 30-59 (SMGGILREAIANATPLGIKAKPYVERGDLL) are NMP. Residues Arg-36, 57-59 (DLL), 85-88 (GYPR), and Gln-92 contribute to the AMP site. Positions 126–132 (NRSLFDD) are LID. Arg-127 serves as a coordination point for ATP. Arg-140 serves as a coordination point for AMP. An ATP-binding site is contributed by Pro-168.

It belongs to the adenylate kinase family. In terms of assembly, monomer.

Its subcellular location is the cytoplasm. It carries out the reaction AMP + ATP = 2 ADP. The protein operates within purine metabolism; AMP biosynthesis via salvage pathway; AMP from ADP: step 1/1. Functionally, catalyzes the reversible transfer of the terminal phosphate group between ATP and AMP. Plays an important role in cellular energy homeostasis and in adenine nucleotide metabolism. This is Adenylate kinase 2 from Synechocystis sp. (strain ATCC 27184 / PCC 6803 / Kazusa).